The chain runs to 457 residues: Phosphoglucosamine mutase (457 aa).

Ser-109 functions as the Phosphoserine intermediate in the catalytic mechanism. Ser-109, Asp-251, Asp-253, and Asp-255 together coordinate Mg(2+). Ser-109 bears the Phosphoserine mark.

This sequence belongs to the phosphohexose mutase family. Mg(2+) is required as a cofactor. Activated by phosphorylation.

It catalyses the reaction alpha-D-glucosamine 1-phosphate = D-glucosamine 6-phosphate. Functionally, catalyzes the conversion of glucosamine-6-phosphate to glucosamine-1-phosphate. In Bdellovibrio bacteriovorus (strain ATCC 15356 / DSM 50701 / NCIMB 9529 / HD100), this protein is Phosphoglucosamine mutase.